The primary structure comprises 257 residues: Low affinity immunoglobulin gamma Fc region receptor III-A (257 aa).

The N-terminal stretch at 1 to 19 is a signal peptide; it reads MWQLLSPTALLLLVSVPGT. Over 20–209 the chain is Extracellular; sequence HAEDPPKSVV…ILSFFLPWHQ (190 aa). Ig-like C2-type domains are found at residues 25–104 and 108–190; these read PKSV…LRLE and GWLL…VKVT. 2 disulfide bridges follow: Cys48-Cys90 and Cys129-Cys173. Residues Asn64, Asn134, and Asn162 are each glycosylated (N-linked (GlcNAc...) asparagine). A glycan (N-linked (GlcNAc...) asparagine; in variant N-181) is linked at Asp181. The helical transmembrane segment at 210-230 threads the bilayer; sequence IIFCLVMGFLFAVDTGLYFSV. Residues 231-257 are Cytoplasmic-facing; sequence RKVLRSSKEDWRNGKVTWSRDPADKGG.

Forms a heterooligomeric complex with ITAM-containing signaling subunits FCER1G. Interacts (via transmembrane domain) with signaling subunits; this interaction is a prerequisite for receptor complex expression on the cell surface and intracellular signal transduction. Binds the Fc region of antigen-complexed IgG. In terms of tissue distribution, expressed in polymorphonuclear leukocytes, pulmonary alveolar macrophages and peripheral blood mononuclear cells (at protein level). Found in spleen, and at very low levels in lymph nodes but not in thymus or liver.

The protein resides in the cell membrane. Receptor for the invariable Fc fragment of immunoglobulin gamma (IgG). Optimally activated upon binding of clustered antigen-IgG complexes displayed on cell surfaces, triggers lysis of antibody-coated cells, a process known as antibody-dependent cellular cytotoxicity (ADCC). Does not bind free monomeric IgG, thus avoiding inappropriate effector cell activation in the absence of antigenic trigger. Mediates IgG effector functions on natural killer (NK) cells. Binds antigen-IgG complexes generated upon infection and triggers NK cell-dependent cytokine production and degranulation to limit viral load and propagation. Fc-binding subunit that associates with FCER1G adapter to form functional signaling complexes. Following the engagement of antigen-IgG complexes, triggers phosphorylation of immunoreceptor tyrosine-based activation motif (ITAM)-containing adapter with subsequent activation of phosphatidylinositol 3-kinase signaling and sustained elevation of intracellular calcium that ultimately drive NK cell activation. Mediates enhanced ADCC in response to afucosylated IgGs. In Sus scrofa (Pig), this protein is Low affinity immunoglobulin gamma Fc region receptor III-A.